The following is a 348-amino-acid chain: GDSL esterase/lipase At4g30140 (348 aa).

Residues 1–28 (MVEGESKALWIILATVFAVAAVAPAVHG) form the signal peptide. Ser40 (nucleophile) is an active-site residue. Residues Asp316 and His319 contribute to the active site. Asn342 carries N-linked (GlcNAc...) asparagine glycosylation.

This sequence belongs to the 'GDSL' lipolytic enzyme family.

The protein resides in the secreted. This is GDSL esterase/lipase At4g30140 from Arabidopsis thaliana (Mouse-ear cress).